The chain runs to 199 residues: Superoxide dismutase [Mn/Fe] (199 aa).

4 residues coordinate Fe(3+): H27, H81, D161, and H165. The Mn(2+) site is built by H27, H81, D161, and H165.

It belongs to the iron/manganese superoxide dismutase family. As to quaternary structure, homodimer. Mn(2+) serves as cofactor. The cofactor is Fe(3+).

The enzyme catalyses 2 superoxide + 2 H(+) = H2O2 + O2. In terms of biological role, destroys superoxide anion radicals which are normally produced within the cells and which are toxic to biological systems. Catalyzes the dismutation of superoxide anion radicals into O2 and H2O2 by successive reduction and oxidation of the transition metal ion at the active site. The polypeptide is Superoxide dismutase [Mn/Fe] (sodA) (Staphylococcus epidermidis).